The sequence spans 605 residues: Tungsten-containing aldehyde ferredoxin oxidoreductase (605 aa).

Tungstopterin contacts are provided by arginine 76, asparagine 93, glycine 95, arginine 182, alanine 183, glycine 185, and arginine 186. Cysteine 288, cysteine 291, and cysteine 295 together coordinate [4Fe-4S] cluster. Tungstopterin is bound by residues aspartate 338, leucine 342, aspartate 343, arginine 444, lysine 450, aspartate 489, and leucine 493. Cysteine 494 is a [4Fe-4S] cluster binding site. Leucine 495 lines the tungstopterin pocket.

The protein belongs to the AOR/FOR family. In terms of assembly, monomer. Homodimer. It depends on [4Fe-4S] cluster as a cofactor. The cofactor is tungstopterin.

It catalyses the reaction an aldehyde + 2 oxidized [2Fe-2S]-[ferredoxin] + H2O = a carboxylate + 2 reduced [2Fe-2S]-[ferredoxin] + 3 H(+). Inhibited by arsenite, iodoacetate and cyanide. Aldehyde ferredoxin oxidoreductase with a broad substrate specificity. Catalyzes the oxidation of a range of aliphatic aldehydes to their corresponding carboxylic acids. In vitro can use crotonaldehyde, acetaldehyde, formaldehyde, butyraldehyde or glyceraldehyde as substrate, using methyl viologen or ferredoxin, but not NAD(P), as the electron acceptor. Does not oxidize glucose or glyceraldehyde 3-phosphate. May be involved in a pyroglycolytic pathway. The sequence is that of Tungsten-containing aldehyde ferredoxin oxidoreductase from Pyrococcus furiosus (strain ATCC 43587 / DSM 3638 / JCM 8422 / Vc1).